Here is a 143-residue protein sequence, read N- to C-terminus: 6,7-dimethyl-8-ribityllumazine synthase (143 aa).

5-amino-6-(D-ribitylamino)uracil-binding positions include W10, 44–46, and 68–70; these read SFE and CVI. 73-74 provides a ligand contact to (2S)-2-hydroxy-3-oxobutyl phosphate; that stretch reads DT. H76 (proton donor) is an active-site residue. Y101 serves as a coordination point for 5-amino-6-(D-ribitylamino)uracil. Residue R115 coordinates (2S)-2-hydroxy-3-oxobutyl phosphate.

It belongs to the DMRL synthase family.

The enzyme catalyses (2S)-2-hydroxy-3-oxobutyl phosphate + 5-amino-6-(D-ribitylamino)uracil = 6,7-dimethyl-8-(1-D-ribityl)lumazine + phosphate + 2 H2O + H(+). The protein operates within cofactor biosynthesis; riboflavin biosynthesis; riboflavin from 2-hydroxy-3-oxobutyl phosphate and 5-amino-6-(D-ribitylamino)uracil: step 1/2. In terms of biological role, catalyzes the formation of 6,7-dimethyl-8-ribityllumazine by condensation of 5-amino-6-(D-ribitylamino)uracil with 3,4-dihydroxy-2-butanone 4-phosphate. This is the penultimate step in the biosynthesis of riboflavin. The polypeptide is 6,7-dimethyl-8-ribityllumazine synthase (Bacteroides fragilis (strain YCH46)).